A 340-amino-acid chain; its full sequence is HTH-type transcriptional regulator CelR (340 aa).

The HTH lacI-type domain occupies 1–61 (MERRRRPTLE…PNRAARTLVT (61 aa)). Residues 9–28 (LEMVAALAGVGRGTVSRVIN) constitute a DNA-binding region (H-T-H motif).

The protein resides in the cytoplasm. Activity is controlled by cytoplasmic cellobiose levels. Binding of CelR to the celE promoter is inhibited specifically by low concentrations of cellobiose, the major end product of cellulases. Activity may also be regulated through post-translational modification. Its function is as follows. Transcriptional regulator that regulates the expression of all six cellulases, encoded by the cel genes (designated celA through celF). Acts as a repressor. Specifically binds to a 14-bp inverted repeat site, which is present in the upstream region of the cellulase genes. This Thermobifida fusca (Thermomonospora fusca) protein is HTH-type transcriptional regulator CelR.